Reading from the N-terminus, the 419-residue chain is UDP-N-acetylglucosamine 1-carboxyvinyltransferase (419 aa).

22–23 (KN) lines the phosphoenolpyruvate pocket. Arg92 lines the UDP-N-acetyl-alpha-D-glucosamine pocket. Cys116 acts as the Proton donor in catalysis. The residue at position 116 (Cys116) is a 2-(S-cysteinyl)pyruvic acid O-phosphothioketal. UDP-N-acetyl-alpha-D-glucosamine contacts are provided by residues 121–125 (RPIDL), Asp306, and Ile328.

This sequence belongs to the EPSP synthase family. MurA subfamily.

The protein localises to the cytoplasm. The catalysed reaction is phosphoenolpyruvate + UDP-N-acetyl-alpha-D-glucosamine = UDP-N-acetyl-3-O-(1-carboxyvinyl)-alpha-D-glucosamine + phosphate. Its pathway is cell wall biogenesis; peptidoglycan biosynthesis. In terms of biological role, cell wall formation. Adds enolpyruvyl to UDP-N-acetylglucosamine. Target for the antibiotic fosfomycin. The protein is UDP-N-acetylglucosamine 1-carboxyvinyltransferase of Streptococcus pneumoniae (strain Hungary19A-6).